A 291-amino-acid polypeptide reads, in one-letter code: 33 kDa chaperonin (291 aa).

Cystine bridges form between C237–C239 and C270–C273.

The protein belongs to the HSP33 family. Under oxidizing conditions two disulfide bonds are formed involving the reactive cysteines. Under reducing conditions zinc is bound to the reactive cysteines and the protein is inactive.

Its subcellular location is the cytoplasm. Functionally, redox regulated molecular chaperone. Protects both thermally unfolding and oxidatively damaged proteins from irreversible aggregation. Plays an important role in the bacterial defense system toward oxidative stress. In Bacillus anthracis (strain A0248), this protein is 33 kDa chaperonin.